Consider the following 283-residue polypeptide: Transmembrane protein 45B (283 aa).

7 helical membrane passes run 7 to 27 (HALP…KCPF), 55 to 75 (LIEG…EQFV), 99 to 119 (MYLF…SHHV), 121 to 141 (VGLD…LFYF), 153 to 173 (IHSL…MEVF), 187 to 207 (LAIL…PLSG), and 218 to 238 (IMFI…IVGI). The interval 261 to 283 (GLRKSTSTDSSSQKALLQESDEE) is disordered. Over residues 264–275 (KSTSTDSSSQKA) the composition is skewed to polar residues.

Belongs to the TMEM45 family.

It is found in the membrane. The sequence is that of Transmembrane protein 45B (tmem45b) from Danio rerio (Zebrafish).